Here is a 524-residue protein sequence, read N- to C-terminus: Bifunctional NAD(P)H-hydrate repair enzyme Nnr (524 aa).

An NAD(P)H-hydrate epimerase region spans residues 1-223 (MAVTSPWFRA…QAIANVLGEV (223 aa)). In terms of domain architecture, YjeF N-terminal spans 17-217 (MQEIENWLFT…GIGLPPQAIA (201 aa)). Residues 66 to 70 (HNGGD) form an NADPHX 1; for epimerase activity region. Residues Asn67 and Asp127 each coordinate K(+). The segment at 131 to 137 (GVGLTRL) is NADPHX 1; for epimerase activity. Position 160 (Asp160) interacts with (6S)-NADPHX. Residue Ser163 coordinates K(+). Positions 231 to 508 (ADQAQQTLPL…EYLIPACRQW (278 aa)) constitute a YjeF C-terminal domain. The interval 231 to 524 (ADQAQQTLPL…NWPANLSHSS (294 aa)) is ADP-dependent (S)-NAD(P)H-hydrate dehydratase. Gly333 lines the (6S)-NADPHX pocket. The NADPHX 2; for dehydratase activity stretch occupies residues 383–389 (HGGEFKR). ADP contacts are provided by residues 417–421 (KGAKT) and 437–446 (TPALARGGSG). A (6S)-NADPHX-binding site is contributed by Asp447.

This sequence in the N-terminal section; belongs to the NnrE/AIBP family. It in the C-terminal section; belongs to the NnrD/CARKD family. The cofactor is K(+).

It catalyses the reaction (6S)-NADHX + ADP = AMP + phosphate + NADH + H(+). The enzyme catalyses (6S)-NADPHX + ADP = AMP + phosphate + NADPH + H(+). The catalysed reaction is (6R)-NADHX = (6S)-NADHX. It carries out the reaction (6R)-NADPHX = (6S)-NADPHX. Functionally, bifunctional enzyme that catalyzes the epimerization of the S- and R-forms of NAD(P)HX and the dehydration of the S-form of NAD(P)HX at the expense of ADP, which is converted to AMP. This allows the repair of both epimers of NAD(P)HX, a damaged form of NAD(P)H that is a result of enzymatic or heat-dependent hydration. This is Bifunctional NAD(P)H-hydrate repair enzyme Nnr (nnr) from Synechocystis sp. (strain ATCC 27184 / PCC 6803 / Kazusa).